An 84-amino-acid chain; its full sequence is Cell division topological specificity factor (84 aa).

It belongs to the MinE family.

In terms of biological role, prevents the cell division inhibition by proteins MinC and MinD at internal division sites while permitting inhibition at polar sites. This ensures cell division at the proper site by restricting the formation of a division septum at the midpoint of the long axis of the cell. The polypeptide is Cell division topological specificity factor (Cupriavidus taiwanensis (strain DSM 17343 / BCRC 17206 / CCUG 44338 / CIP 107171 / LMG 19424 / R1) (Ralstonia taiwanensis (strain LMG 19424))).